Reading from the N-terminus, the 1074-residue chain is MAGVLCPTEEDRSSRAALRMLPPQPCPDESGAYRRMSGPTLSQVQEEPAAEPPQPPASAAEDDVRKRGYLRKQKHGHKRYFVLRSQSHLGPARLEYYDNEKKFRSGQRSGCHPKRVIPLYLCFTVSRRADAKNKHLVALYTKDEYFAMAAENEQEQDGWYQALSELINESKGACLDTEELEENYGTLRPGTVFKEVWQVNVKPRGLGQAKNLSGVYRLCLSSKAVHLVKLNSDVACVHLLLMNIRRCGHSENYFFIEVGRSSSTGAGELWMQVDDCVVAQHMHETFLDTMKALKAYSEFRPRSKSQSSCTNPISFITTRRYLGNLPPSQTGLQRRARTESMVGTPPSAKNNSFRFRTSSEGEGTMTRPFRSVTGSLSHLNTARINLGKQEGAGRYVRAPFNSGYQSRSASLPVSHFPSATSPISVCSSSGHGSASETLTRPSSSSVCGSPSDGGFISSDEYGSSPGDLRYFRVRSNTPDSLGNTPPIQEENTLSDYMSMSTHSQPDSRDDYMEADKCFRKRTYSLTKHTNSASKQKSQTAISLGEDSEEINKQFAFAESPKLKDSSLVDDYSNGVIDSVCNQSRSKASDDGYMPMMPSNLYDSDYLPMAPKTVSAPKQINRCPSQADSKGYMMMFPINSSPVKNVFGGAATKSNLEKLSNGGYMDMSYGNSTKQIHDSNLNNNSRGLSSYFSLPRSFKSLTKQTTDQNEYVPMSSPGKLLHLGAENGVDVCKDGAVHDIAKIELKSSSSILDQQVKRPNKLTLGIRGSNTIPRMFDHSAPAEPTSPGEYINIDFSDKASSTPYSLSADGSPSSLGSSCDHRQSPLSDYMSVDIDVQSPKATAEQSNSLTDISLYACTVVSRMQPNAEYAKLPCGTACVSKTDNIMDDYTTMTFNMAMTPPRSFASETENGTKVDSPSSIVNRLCIGELTSLNSGFSLPNPLPEPIAGPKVIRADSQGRRRHSSETFASSSTVTTSSSCFTESGKRHSSASFDNVWLKPDENSCEQENKMSRHCSTGFQNGLNYISLSMHNGVCEPTSPDCHQHQNGSRNLESGGYVSIDFTRCDCLKCPTSRKD.

The segment at 1–64 is disordered; the sequence is MAGVLCPTEE…PPASAAEDDV (64 aa). Short sequence motifs (YXXM motif) lie at residues 33 to 36 and 145 to 148; these read YRRM and YFAM. Residues 63 to 168 form the PH domain; sequence DVRKRGYLRK…WYQALSELIN (106 aa). Residues 193 to 297 enclose the IRS-type PTB domain; it reads FKEVWQVNVK…DTMKALKAYS (105 aa). Disordered regions lie at residues 326–370, 426–461, and 475–510; these read PPSQ…RPFR, CSSS…SDEY, and SNTP…SRDD. A compositionally biased stretch (polar residues) spans 347-361; it reads SAKNNSFRFRTSSEG. Low complexity-rich tracts occupy residues 426–435 and 442–454; these read CSSSGHGSAS and SSSS…SDGG. The segment covering 475-504 has biased composition (polar residues); sequence SNTPDSLGNTPPIQEENTLSDYMSMSTHSQ. Short sequence motifs (YXXM motif) lie at residues 496 to 499, 592 to 595, 605 to 608, 631 to 634, 663 to 666, and 710 to 713; these read YMSM, YMPM, YLPM, YMMM, YMDM, and YVPM. A disordered region spans residues 801–821; that stretch reads TPYSLSADGSPSSLGSSCDHR. Positions 804 to 817 are enriched in low complexity; sequence SLSADGSPSSLGSS. The YXXM motif 9 signature appears at 888–891; that stretch reads YTTM.

Post-translationally, phosphorylated by INSR.

In terms of biological role, potentiates insulin signaling. The sequence is that of Insulin receptor substrate 2-A (irs2-a) from Xenopus laevis (African clawed frog).